Reading from the N-terminus, the 454-residue chain is MTLPLHVVILAAGEGKRMRSSLPKVLQPLAGQPMLAHVIATARQLQPAAIHIVYGHGSDQVQAAFADQSDLQWAAQREQLGTGHAVQQAMPAIPDAARVLVLYGDVPLIRSESLLQLLHAPGRMAVLVAELANPTGYGRILRDAEGKVAAIVEQKDANDEQRRIRTINTGILTAESTALRRWLGGLSNDNAQGEFYLTDVFASAAADFTPADMVHVADPQDVEGANDPWQLAQLERAWQLRAARALSLQGVRMADPARVEQRGSVQVGRDVQLDIDVILEGEVTLGDDVVIGPFVRLRDVTLGAGTQVRAHSDLEGVITEGAVQIGPFARLRPGTVLADGVHIGNFVETKKVTMGVDSKANHLTYLGDAVIGSKVNIGAGTITCNYDGVNKSQTTIGDGAFVGSNSALVAPIEIGANSTIGAGSVVTRDAPAGQLTVTRARQTVIEGWERPTKK.

The tract at residues 1–228 (MTLPLHVVIL…PQDVEGANDP (228 aa)) is pyrophosphorylase. Residues 10-13 (LAAG), K24, Q76, 81-82 (GT), 103-105 (YGD), G138, E153, N168, and N226 each bind UDP-N-acetyl-alpha-D-glucosamine. Residue D105 coordinates Mg(2+). N226 contacts Mg(2+). The interval 229 to 249 (WQLAQLERAWQLRAARALSLQ) is linker. The interval 250–454 (GVRMADPARV…IEGWERPTKK (205 aa)) is N-acetyltransferase. UDP-N-acetyl-alpha-D-glucosamine-binding residues include R332 and K350. Residue H362 is the Proton acceptor of the active site. Residues Y365 and N376 each coordinate UDP-N-acetyl-alpha-D-glucosamine. Residues A379, 385–386 (NY), S404, A422, and R439 each bind acetyl-CoA.

This sequence in the N-terminal section; belongs to the N-acetylglucosamine-1-phosphate uridyltransferase family. The protein in the C-terminal section; belongs to the transferase hexapeptide repeat family. In terms of assembly, homotrimer. The cofactor is Mg(2+).

The protein resides in the cytoplasm. The catalysed reaction is alpha-D-glucosamine 1-phosphate + acetyl-CoA = N-acetyl-alpha-D-glucosamine 1-phosphate + CoA + H(+). The enzyme catalyses N-acetyl-alpha-D-glucosamine 1-phosphate + UTP + H(+) = UDP-N-acetyl-alpha-D-glucosamine + diphosphate. It participates in nucleotide-sugar biosynthesis; UDP-N-acetyl-alpha-D-glucosamine biosynthesis; N-acetyl-alpha-D-glucosamine 1-phosphate from alpha-D-glucosamine 6-phosphate (route II): step 2/2. The protein operates within nucleotide-sugar biosynthesis; UDP-N-acetyl-alpha-D-glucosamine biosynthesis; UDP-N-acetyl-alpha-D-glucosamine from N-acetyl-alpha-D-glucosamine 1-phosphate: step 1/1. Its pathway is bacterial outer membrane biogenesis; LPS lipid A biosynthesis. Functionally, catalyzes the last two sequential reactions in the de novo biosynthetic pathway for UDP-N-acetylglucosamine (UDP-GlcNAc). The C-terminal domain catalyzes the transfer of acetyl group from acetyl coenzyme A to glucosamine-1-phosphate (GlcN-1-P) to produce N-acetylglucosamine-1-phosphate (GlcNAc-1-P), which is converted into UDP-GlcNAc by the transfer of uridine 5-monophosphate (from uridine 5-triphosphate), a reaction catalyzed by the N-terminal domain. This Xanthomonas oryzae pv. oryzae (strain MAFF 311018) protein is Bifunctional protein GlmU.